Here is a 126-residue protein sequence, read N- to C-terminus: Copper resistance protein C (126 aa).

A signal peptide spans 1–24; it reads MLLNRTSFVTLFAAGMLVSALAQA. His-25 is a binding site for Cu(2+). Cu(+) contacts are provided by Met-64, Met-67, Met-70, His-72, and Met-75. Residue His-115 coordinates Cu(2+).

It belongs to the CopC family. As to quaternary structure, monomer.

Its subcellular location is the periplasm. The redox state of copper bound to CopC may act as a switch between the possible trafficking pathways of the metal ion. Functionally, copper-binding protein involved in copper resistance and homeostasis. Probably mediates copper resistance by sequestering the excess of copper in the periplasm. May act as a copper carrier in the oxidizing periplasmic space that exchanges either Cu(I) or Cu(II) with its putative partners CopA, CopB and CopD. The protein is Copper resistance protein C of Pseudomonas syringae pv. tomato.